Consider the following 117-residue polypeptide: Nascent polypeptide-associated complex protein (117 aa).

One can recognise an NAC-A/B domain in the interval 9-77 (PKQLKQMQRA…ARERSLEAEM (69 aa)).

It belongs to the NAC-alpha family. Homodimer. Interacts with the ribosome. Binds ribosomal RNA.

Its function is as follows. Contacts the emerging nascent chain on the ribosome. The chain is Nascent polypeptide-associated complex protein from Methanothermobacter thermautotrophicus (strain ATCC 29096 / DSM 1053 / JCM 10044 / NBRC 100330 / Delta H) (Methanobacterium thermoautotrophicum).